A 197-amino-acid polypeptide reads, in one-letter code: Outer membrane protein 26 (197 aa).

The N-terminal stretch at 1–23 (MKNIAKVTALALGIALASGYASA) is a signal peptide.

This sequence belongs to the Skp family.

The protein localises to the cell outer membrane. This chain is Outer membrane protein 26 (omp26), found in Haemophilus influenzae (strain ATCC 51907 / DSM 11121 / KW20 / Rd).